A 188-amino-acid chain; its full sequence is Kappa-casein (188 aa).

Residues 1-21 (MMKSSFLIVPILALTLPFLGA) form the signal peptide. 2 O-linked (GalNAc...) threonine glycosylation sites follow: threonine 143 and threonine 148. Threonine 163 carries the post-translational modification Phosphothreonine. Serine 167 carries the post-translational modification Phosphoserine; alternate. Residue serine 167 is glycosylated (O-linked (GalNAc...) serine; alternate). The O-linked (GalNAc...) threonine glycan is linked to threonine 184. Residue serine 185 is modified to Phosphoserine.

Belongs to the kappa-casein family. As to expression, mammary gland specific. Secreted in milk.

The protein resides in the secreted. In terms of biological role, kappa-casein stabilizes micelle formation, preventing casein precipitation in milk. The sequence is that of Kappa-casein (CSN3) from Sus scrofa (Pig).